The sequence spans 152 residues: Lipoprotein signal peptidase (152 aa).

Transmembrane regions (helical) follow at residues Asn-55–Met-75 and Leu-85–Phe-105. Active-site residues include Asp-111 and Asp-129. The chain crosses the membrane as a helical span at residues Val-124–Leu-144.

It belongs to the peptidase A8 family.

It is found in the cell membrane. It carries out the reaction Release of signal peptides from bacterial membrane prolipoproteins. Hydrolyzes -Xaa-Yaa-Zaa-|-(S,diacylglyceryl)Cys-, in which Xaa is hydrophobic (preferably Leu), and Yaa (Ala or Ser) and Zaa (Gly or Ala) have small, neutral side chains.. It participates in protein modification; lipoprotein biosynthesis (signal peptide cleavage). Functionally, this protein specifically catalyzes the removal of signal peptides from prolipoproteins. The chain is Lipoprotein signal peptidase from Bacillus cereus (strain B4264).